Here is a 244-residue protein sequence, read N- to C-terminus: Probable metallo-hydrolase YhfI (244 aa).

Residues histidine 59, histidine 61, aspartate 63, histidine 64, histidine 134, aspartate 155, and histidine 211 each coordinate Zn(2+).

This sequence belongs to the metallo-beta-lactamase superfamily. It depends on Zn(2+) as a cofactor.

This is Probable metallo-hydrolase YhfI (yhfI) from Bacillus subtilis (strain 168).